A 1759-amino-acid polypeptide reads, in one-letter code: Replicase polyprotein (1759 aa).

A DRBM domain is found at 23-90; it reads DKISTLKMVA…ARQMLLLLSG (68 aa). The stretch at 113-140 forms a coiled coil; it reads YTRLEKAIERRDDKIKTLIKELRRQIKN. Residues 421–595 form the SF3 helicase domain; it reads AKQLYEYVSC…KEYGIETEKG (175 aa). 449–456 is an ATP binding site; sequence GESGVGKT. The Peptidase C3 domain maps to 950-1191; the sequence is DAAHNLMIDV…YACPLTQECL (242 aa). Residues His-994, Asp-1054, and Cys-1152 each act as for picornain 3C-like protease activity in the active site. In terms of domain architecture, RdRp catalytic spans 1483-1622; it reads SHVIAGDFGN…NIDAKVVEWF (140 aa).

In terms of processing, protein 1A might be expressed through a ribosomal skip from one codon to the next without formation of a peptide bond.

It carries out the reaction RNA(n) + a ribonucleoside 5'-triphosphate = RNA(n+1) + diphosphate. Protein 1A functions as a suppressor of RNA-mediated gene silencing, an antiviral defense mechanism of insect cells. Binds to long dsRNA and to a lesser extent, to siRNA. Its function is as follows. RNA-directed RNA polymerase replicates genomic and antigenomic RNA. The sequence is that of Replicase polyprotein from Drosophila C virus (strain EB) (DCV).